The chain runs to 120 residues: MARVKRGVVARARHKKVLKLANGYYGARSRVYRVAFQAVLKAGQYCYRDRRCKKRQFRKLWITRINAAVRQHGITYSCFMNSLKKASIHIDRKILAEIAISDKVAFATLAEKAKSILCVT.

This sequence belongs to the bacterial ribosomal protein bL20 family.

Its function is as follows. Binds directly to 23S ribosomal RNA and is necessary for the in vitro assembly process of the 50S ribosomal subunit. It is not involved in the protein synthesizing functions of that subunit. The sequence is that of Large ribosomal subunit protein bL20 from Baumannia cicadellinicola subsp. Homalodisca coagulata.